Reading from the N-terminus, the 472-residue chain is GTPase HflX (472 aa).

The tract at residues 1-21 (MDTIDTPGEQGSQSFGNSLGA) is disordered. In terms of domain architecture, Hflx-type G spans 230–396 (PTFALIGYTN…LMTEIIQEKS (167 aa)). GTP is bound by residues 236–243 (GYTNSGKS), 261–265 (FATLD), 283–286 (DTVG), 349–352 (NKVD), and 374–376 (SAK). Mg(2+) contacts are provided by Ser243 and Thr263.

This sequence belongs to the TRAFAC class OBG-HflX-like GTPase superfamily. HflX GTPase family. Monomer. Associates with the 50S ribosomal subunit. The cofactor is Mg(2+).

The protein localises to the cytoplasm. GTPase that associates with the 50S ribosomal subunit and may have a role during protein synthesis or ribosome biogenesis. Specific for GTP. This is GTPase HflX from Chlamydia pneumoniae (Chlamydophila pneumoniae).